The primary structure comprises 1051 residues: Helicase POLQ-like (1051 aa).

The segment covering 1-10 (MANKHNLCKK) has biased composition (basic residues). 2 disordered regions span residues 1–28 (MANK…AKRQ) and 61–112 (LFGT…APTD). 2 stretches are compositionally biased toward polar residues: residues 64 to 78 (TQAT…QSGS) and 89 to 102 (SFPS…NSAS). Over residues 103 to 112 (KPDEASAPTD) the composition is skewed to basic and acidic residues. The Helicase ATP-binding domain occupies 274–446 (LPAIRQRKNL…FLNADVYTRG (173 aa)). Residue 287–294 (LPTSGGKT) participates in ATP binding. A DEAH box motif is present at residues 391 to 394 (DELH). One can recognise a Helicase C-terminal domain in the interval 497–689 (HLAGLISECA…NEAVGLQSLI (193 aa)).

The protein belongs to the helicase family. SKI2 subfamily.

It localises to the nucleus. The protein localises to the chromosome. It carries out the reaction Couples ATP hydrolysis with the unwinding of duplex DNA by translocating in the 3'-5' direction.. It catalyses the reaction ATP + H2O = ADP + phosphate + H(+). Its function is as follows. Single-stranded 3'-5' DNA helicase that plays a key role in homology-driven double-strand break (DSB) repair. Involved in different DSB repair mechanisms that are guided by annealing of extensive stretches of complementary bases at break ends, such as microhomology-mediated end-joining (MMEJ), single-strand annealing (SSA) or synthesis-dependent strand annealing (SDSA). The protein is Helicase POLQ-like of Drosophila melanogaster (Fruit fly).